The primary structure comprises 853 residues: Aryl hydrocarbon receptor (853 aa).

Residues 1–9 (MSSGANITY) constitute a propeptide that is removed on maturation. The interval 1-38 (MSSGANITYASRKRRKPVQKTVKPVPAEGIKSNPSKRH) is disordered. 2 short sequence motifs (nuclear localization signal) span residues 12–15 (RKRR) and 36–41 (KRHRDR). In terms of domain architecture, bHLH spans 26-79 (PAEGIKSNPSKRHRDRLNTELDRLASLLPFPQDVINKLDKLSVLRLSVSYLRAK). A DNA-binding region spans residues 37–65 (RHRDRLNTELDRLASLLPFPQDVINKLDK). Required for maintaining the overall integrity of the AHR:ARNT heterodimer and its transcriptional activity stretches follow at residues 49 to 81 (LASL…AKSF), 116 to 124 (LLQALNGFV), and 264 to 266 (FAI). The Nuclear export signal motif lies at 63-71 (LDKLSVLRL). In terms of domain architecture, PAS 1 spans 116–179 (LLQALNGFVL…RQLHWALNPS (64 aa)). The 68-residue stretch at 273 to 340 (PSILEIRTKN…CAESHIRMIK (68 aa)) folds into the PAS 2 domain. In terms of domain architecture, PAC spans 346–384 (MTVFRLLAKHSRWRWVQSNARLIYRNGRPDYIIATQRPL). Residues 429–451 (TKSNTSRKDWAPQSTPSKDSFHP) are disordered. Polar residues predominate over residues 440–451 (PQSTPSKDSFHP).

As to quaternary structure, homodimer. Heterodimer; efficient DNA binding requires dimerization with another bHLH protein. Interacts with ARNT; the heterodimer ARNT:AHR binds to core DNA sequence 5'-TGCGTG-3' within the dioxin response element (DRE) of target gene promoters and activates their transcription. Binds MYBBP1A. Interacts with coactivators including SRC-1, RIP140 and NOCA7, and with the corepressor SMRT. Interacts with NEDD8 and IVNS1ABP. Interacts with BMAL1. Interacts with HSP90AB1. Interacts with TIPARP; leading to mono-ADP-ribosylation of AHR and subsequent inhibition of AHR. Post-translationally, mono-ADP-ribosylated, leading to inhibit transcription activator activity of AHR. Expressed in all tissues tested including brain, heart, kidney, liver, lung, spleen, skeletal muscle and thymus.

Its subcellular location is the cytoplasm. The protein localises to the nucleus. Functionally, ligand-activated transcription factor that enables cells to adapt to changing conditions by sensing compounds from the environment, diet, microbiome and cellular metabolism, and which plays important roles in development, immunity and cancer. Upon ligand binding, translocates into the nucleus, where it heterodimerizes with ARNT and induces transcription by binding to xenobiotic response elements (XRE). Regulates a variety of biological processes, including angiogenesis, hematopoiesis, drug and lipid metabolism, cell motility and immune modulation. Xenobiotics can act as ligands: upon xenobiotic-binding, activates the expression of multiple phase I and II xenobiotic chemical metabolizing enzyme genes (such as the CYP1A1 gene). Mediates biochemical and toxic effects of halogenated aromatic hydrocarbons. Next to xenobiotics, natural ligands derived from plants, microbiota, and endogenous metabolism are potent AHR agonists. Tryptophan (Trp) derivatives constitute an important class of endogenous AHR ligands. Acts as a negative regulator of anti-tumor immunity: indoles and kynurenic acid generated by Trp catabolism act as ligand and activate AHR, thereby promoting AHR-driven cancer cell motility and suppressing adaptive immunity. Regulates the circadian clock by inhibiting the basal and circadian expression of the core circadian component PER1. Inhibits PER1 by repressing the CLOCK-BMAL1 heterodimer mediated transcriptional activation of PER1. The heterodimer ARNT:AHR binds to core DNA sequence 5'-TGCGTG-3' within the dioxin response element (DRE) of target gene promoters and activates their transcription. This Rattus norvegicus (Rat) protein is Aryl hydrocarbon receptor (Ahr).